We begin with the raw amino-acid sequence, 315 residues long: GPN-loop GTPase 2 homolog (315 aa).

12 to 17 (GSGKTV) lines the GTP pocket. The short motif at 69–71 (GPN) is the Gly-Pro-Asn (GPN)-loop; involved in dimer interface element. Residue 171-174 (SKMD) participates in GTP binding.

Belongs to the GPN-loop GTPase family. In terms of assembly, heterodimers with gpn1 or gpn3. Binds to RNA polymerase II (RNAPII).

In terms of biological role, small GTPase required for proper localization of RNA polymerase II and III (RNAPII and RNAPIII). May act at an RNAP assembly step prior to nuclear import. This is GPN-loop GTPase 2 homolog (gpn2) from Dictyostelium discoideum (Social amoeba).